The following is a 474-amino-acid chain: UDP-N-acetylmuramoyl-L-alanyl-D-glutamate--2,6-diaminopimelate ligase (474 aa).

Position 21 (serine 21) interacts with UDP-N-acetyl-alpha-D-muramoyl-L-alanyl-D-glutamate. 93-99 (GTNGKSS) contributes to the ATP binding site. UDP-N-acetyl-alpha-D-muramoyl-L-alanyl-D-glutamate is bound by residues 139–140 (TT), serine 166, glutamine 172, and arginine 174. Residue lysine 206 is modified to N6-carboxylysine. Meso-2,6-diaminopimelate-binding positions include arginine 367, 391–394 (DNPR), glycine 441, and glutamate 445. The Meso-diaminopimelate recognition motif signature appears at 391-394 (DNPR).

Belongs to the MurCDEF family. MurE subfamily. Mg(2+) serves as cofactor. In terms of processing, carboxylation is probably crucial for Mg(2+) binding and, consequently, for the gamma-phosphate positioning of ATP.

It is found in the cytoplasm. It carries out the reaction UDP-N-acetyl-alpha-D-muramoyl-L-alanyl-D-glutamate + meso-2,6-diaminopimelate + ATP = UDP-N-acetyl-alpha-D-muramoyl-L-alanyl-gamma-D-glutamyl-meso-2,6-diaminopimelate + ADP + phosphate + H(+). Its pathway is cell wall biogenesis; peptidoglycan biosynthesis. In terms of biological role, catalyzes the addition of meso-diaminopimelic acid to the nucleotide precursor UDP-N-acetylmuramoyl-L-alanyl-D-glutamate (UMAG) in the biosynthesis of bacterial cell-wall peptidoglycan. In Rickettsia bellii (strain RML369-C), this protein is UDP-N-acetylmuramoyl-L-alanyl-D-glutamate--2,6-diaminopimelate ligase.